Reading from the N-terminus, the 207-residue chain is Small ribosomal subunit protein uS4 (207 aa).

Positions 31-51 (KCKLDSKPGQHGRTSGARTSD) are disordered. The region spanning 97 to 160 (SRLDNVVYRM…KKQARIRESL (64 aa)) is the S4 RNA-binding domain.

It belongs to the universal ribosomal protein uS4 family. In terms of assembly, part of the 30S ribosomal subunit. Contacts protein S5. The interaction surface between S4 and S5 is involved in control of translational fidelity.

Functionally, one of the primary rRNA binding proteins, it binds directly to 16S rRNA where it nucleates assembly of the body of the 30S subunit. With S5 and S12 plays an important role in translational accuracy. In Bordetella avium (strain 197N), this protein is Small ribosomal subunit protein uS4.